The chain runs to 54 residues: Putative collagen-like domain-containing protein 065L (54 aa).

A disordered region spans residues 1 to 54 (MRGLEAPGAVGPTGPSGAPGSQGPDGDVGGMGPEGPKGDDGPVGPKGPQGAAIF). The 45-residue stretch at 7–51 (PGAVGPTGPSGAPGSQGPDGDVGGMGPEGPKGDDGPVGPKGPQGA) folds into the Collagen-like domain. Positions 26-35 (GDVGGMGPEG) are enriched in gly residues. Low complexity predominate over residues 42-54 (PVGPKGPQGAAIF).

The polypeptide is Putative collagen-like domain-containing protein 065L (Dryophytes versicolor (chameleon treefrog)).